The primary structure comprises 769 residues: Endothelin-converting enzyme 1 (769 aa).

Residues 1–67 (MRTVWSPLAA…WAARTSVEKR (67 aa)) lie on the Cytoplasmic side of the membrane. Threonine 24 carries the phosphothreonine modification. Residues 68–88 (LVVLVTLLAAGLVACLAALGI) traverse the membrane as a helical; Signal-anchor for type II membrane protein segment. Over 89–769 (QYQTRTPPVC…MNPHHKCEVW (681 aa)) the chain is Extracellular. A Peptidase M13 domain is found at 97–769 (VCLTEACVSV…MNPHHKCEVW (673 aa)). Disulfide bonds link cysteine 98-cysteine 103, cysteine 121-cysteine 754, cysteine 129-cysteine 714, cysteine 184-cysteine 434, and cysteine 643-cysteine 766. Asparagine 165, asparagine 186, asparagine 209, asparagine 269, asparagine 315, asparagine 361, asparagine 382, and asparagine 538 each carry an N-linked (GlcNAc...) asparagine glycan. Position 606 (histidine 606) interacts with Zn(2+). Glutamate 607 is an active-site residue. Histidine 610 provides a ligand contact to Zn(2+). 2 N-linked (GlcNAc...) asparagine glycosylation sites follow: asparagine 631 and asparagine 650. Glutamate 666 is a Zn(2+) binding site. Aspartate 670 functions as the Proton donor in the catalytic mechanism.

This sequence belongs to the peptidase M13 family. In terms of assembly, homodimer; disulfide-linked. Interacts with PPP1R16B. Interacts with TSPAN8; this interaction recruits the endothelin converting enzyme ECE1 to tetraspanin-enriched microdomains and positively modulates its enzymatic activity. The cofactor is Zn(2+).

The protein resides in the cell membrane. It carries out the reaction Hydrolysis of the 21-Trp-|-Val-22 bond in big endothelin to form endothelin 1.. With respect to regulation, inhibited by phosphoramidon. Its function is as follows. Converts big endothelin-1 to endothelin-1. This is Endothelin-converting enzyme 1 (Ece1) from Mus musculus (Mouse).